The following is a 423-amino-acid chain: MVEGIPKRWKVLSGQNKWKGLLDPLDPDLRRYIIHYGEMSQVGYDAFNWDRKSRYAGDCYYSKNRLLARTGFLKANPFRYKVTKYIYATASIKLPISFIVKSLSKDASRVQTNWMGYIAVATDQGKAMLGRRDIVVAWRGTLQPYEWANDFDFPLEPAISVFPVTDPKDNPRIGSGWLDIYTASDSRSPYDTTSAQEQVQGELKRLLELYKDEEISITFTGHSLGAVMSVLSAADLVYGKKNNININLQKKQVPITVFAFGSPRIGDHNFKNVVDSLQPLNILRIVNVPDVAPHYPLLLYSEIGEVLEINTLNSTYLKRSLNFRNYHNLEIYLHGMAGMQDTDGVFKLEIGRDISLVNKGLDALKDEYLVPSTWRCLANKGMLQMDDGTWKLDVHRRDHDDDVDADDNDDSSTSNQLQELNTD.

The stretch at 194–217 (SAQEQVQGELKRLLELYKDEEISI) forms a coiled coil. The active-site Acyl-ester intermediate is the Ser-223. Catalysis depends on charge relay system residues Ser-223, Asp-290, and His-327. Residues 399–423 (HDDDVDADDNDDSSTSNQLQELNTD) form a disordered region. The segment covering 401-410 (DDVDADDNDD) has biased composition (acidic residues). Over residues 411–423 (SSTSNQLQELNTD) the composition is skewed to polar residues.

This sequence belongs to the AB hydrolase superfamily. Lipase family.

The protein resides in the cytoplasm. Functionally, acylhydrolase that catalyzes the hydrolysis of phospholipids at the sn-1 position. The sequence is that of Phospholipase A1-IIalpha from Arabidopsis thaliana (Mouse-ear cress).